The sequence spans 178 residues: MSNVFHATTIVCVRRGDKVAIAGDGQVTLGHTVMKSNARKVRRLGRDGQVLAGFAGAAADAFTLFELFEAKLEKHGQLSRAAVELAKDWRTERRLGKLEALLVVADKETSLVISGTGDVIEPEDGIVAIGSGGSYALSAARALMAHTALDARTIATEAIGIAGNICIYTNRNVVVDEL.

Thr-8 is an active-site residue. Na(+)-binding residues include Gly-163, Cys-166, and Thr-169.

The protein belongs to the peptidase T1B family. HslV subfamily. As to quaternary structure, a double ring-shaped homohexamer of HslV is capped on each side by a ring-shaped HslU homohexamer. The assembly of the HslU/HslV complex is dependent on binding of ATP.

It localises to the cytoplasm. It catalyses the reaction ATP-dependent cleavage of peptide bonds with broad specificity.. With respect to regulation, allosterically activated by HslU binding. Protease subunit of a proteasome-like degradation complex believed to be a general protein degrading machinery. This chain is ATP-dependent protease subunit HslV, found in Xylella fastidiosa (strain 9a5c).